Reading from the N-terminus, the 325-residue chain is Phospholipid phosphatase-related protein type 1 (325 aa).

N-linked (GlcNAc...) asparagine glycosylation is present at Asn-5. Helical transmembrane passes span 13–33, 67–87, and 127–147; these read IIPC…LLAY, FISP…IIFI, and FIGV…AGQV. A glycan (N-linked (GlcNAc...) asparagine) is linked at Asn-163. A run of 3 helical transmembrane segments spans residues 201-219, 226-244, and 257-277; these read AALS…TSTI, LAKP…LTGL, and VIAG…CVVH. A Phosphoserine modification is found at Ser-307. Asn-316 carries an N-linked (GlcNAc...) asparagine glycan.

The protein belongs to the PA-phosphatase related phosphoesterase family. Highly expressed in the brain. Also found in the liver, kidney and testis. In the brain shows a strongest expression in the hippocampus and cerebellum.

Its subcellular location is the cell membrane. It is found in the cell projection. It localises to the neuron projection. Its function is as follows. May play a role in neurite outgrowth and neurogenesis. This chain is Phospholipid phosphatase-related protein type 1, found in Rattus norvegicus (Rat).